A 666-amino-acid polypeptide reads, in one-letter code: Neurexin-2-beta (666 aa).

Residues 1-10 (MPPGGSGPGG) show a composition bias toward gly residues. Residues 1 to 30 (MPPGGSGPGGCPRRPPALAGPLPPPPPPPP) are disordered. The signal sequence occupies residues 1–50 (MPPGGSGPGGCPRRPPALAGPLPPPPPPPPPPLLPLLPLLLLLLLGAAEG). Residues 21-30 (PLPPPPPPPP) are compositionally biased toward pro residues. At 51 to 590 (ARVSSSLSTT…EVIRESSSTT (540 aa)) the chain is on the extracellular side. The region spanning 91–299 (TTYIFGKGGA…HLRLVGEGPS (209 aa)) is the Laminin G-like domain. Residues Asp143 and Val160 each contribute to the Ca(2+) site. Asn190 is a glycosylation site (N-linked (GlcNAc...) asparagine). The Ca(2+) site is built by Ile242 and Asn244. The disordered stretch occupies residues 327–346 (ATTTTRRGRSPTLRDSTTQN). O-linked (Xyl...) (heparan sulfate) serine glycosylation is present at Ser354. 2 disordered regions span residues 412–443 (ATQD…CEEP) and 479–580 (TLLS…PGAV). Residues 591–611 (GMVVGIVAAAALCILILLYAM) form a helical membrane-spanning segment. At 612–666 (YKYRNRDEGSYQVDQSRNYISNSAQSNGAVVKEKAPAAPKTPSKAKKNKDKEYYV) the chain is on the cytoplasmic side. Positions 633-666 (NSAQSNGAVVKEKAPAAPKTPSKAKKNKDKEYYV) are disordered.

This sequence belongs to the neurexin family. Interacts (via cytoplasmic C-terminal region) with CASK. Specific isoforms bind alpha-dystroglycan and neuroligins NLGN1, NLGN2 and NLGN3. Interacts with CBLN1, CBLN2 and, less avidly, with CBLN4. Interacts with CLSTN3. In terms of processing, O-glycosylated; contains heparan sulfate. Heparan sulfate attachment is required for synapse development by mediating interactions with neuroligins.

The protein resides in the presynaptic cell membrane. Neuronal cell surface protein that may be involved in cell recognition and cell adhesion. In Homo sapiens (Human), this protein is Neurexin-2-beta (NRXN2).